Reading from the N-terminus, the 674-residue chain is Methionine--tRNA ligase (674 aa).

The 'HIGH' region signature appears at 11-21 (PYANGDLHLGH). Cys142, Cys145, Cys155, and Cys158 together coordinate Zn(2+). The short motif at 330–334 (KMSKS) is the 'KMSKS' region element. An ATP-binding site is contributed by Lys333. Residues 574–674 (DFMKVDLRIA…EGAQPGMRVK (101 aa)) enclose the tRNA-binding domain.

Belongs to the class-I aminoacyl-tRNA synthetase family. MetG type 1 subfamily. As to quaternary structure, homodimer. It depends on Zn(2+) as a cofactor.

The protein localises to the cytoplasm. It carries out the reaction tRNA(Met) + L-methionine + ATP = L-methionyl-tRNA(Met) + AMP + diphosphate. Is required not only for elongation of protein synthesis but also for the initiation of all mRNA translation through initiator tRNA(fMet) aminoacylation. The sequence is that of Methionine--tRNA ligase from Francisella tularensis subsp. tularensis (strain FSC 198).